The primary structure comprises 316 residues: MTVIDNHEALAEDGEMSEASARDYFELLKPRVMSLVVFTAFAGLVLAPGHINPVLGLIAILCIAVGAGASGALNMWYDADIDAIMSRTAKRPIPAGRIAPSEALAFGLVLSGFSVVILGLAVNWLSAAILAFTIFFYAVIYTMWLKRSTPQNIVIGGAAGAFPPMIGWACVTNSVTIESTVLFLIIFLWTPAHFWALALFKMRDYEAVGVPMLPNVSGERVTKHQIVAYAVLTAICAVLPSFLGFASFGYGLVAAALGAIFVYCSIAVWRMPDGDLKMIPAKKLFAFSIFYLFAVFSALMIDRLAAILVSQAGGSF.

Transmembrane regions (helical) follow at residues valine 32–asparagine 52, proline 53–leucine 73, isoleucine 93–phenylalanine 113, valine 116–phenylalanine 136, asparagine 152–threonine 172, threonine 180–phenylalanine 200, valine 221–serine 241, leucine 252–methionine 271, and isoleucine 289–valine 309.

This sequence belongs to the UbiA prenyltransferase family. Protoheme IX farnesyltransferase subfamily.

The protein localises to the cell inner membrane. The enzyme catalyses heme b + (2E,6E)-farnesyl diphosphate + H2O = Fe(II)-heme o + diphosphate. The protein operates within porphyrin-containing compound metabolism; heme O biosynthesis; heme O from protoheme: step 1/1. Converts heme B (protoheme IX) to heme O by substitution of the vinyl group on carbon 2 of heme B porphyrin ring with a hydroxyethyl farnesyl side group. This is Protoheme IX farnesyltransferase from Rhizobium etli (strain ATCC 51251 / DSM 11541 / JCM 21823 / NBRC 15573 / CFN 42).